The following is a 350-amino-acid chain: Biotin synthase (350 aa).

In terms of domain architecture, Radical SAM core spans 63-281 (GDIELATLLS…IAVARITMPK (219 aa)). [4Fe-4S] cluster-binding residues include cysteine 78, cysteine 82, and cysteine 85. Residues cysteine 122, cysteine 153, cysteine 213, and arginine 285 each contribute to the [2Fe-2S] cluster site.

It belongs to the radical SAM superfamily. Biotin synthase family. Homodimer. The cofactor is [4Fe-4S] cluster. Requires [2Fe-2S] cluster as cofactor.

The enzyme catalyses (4R,5S)-dethiobiotin + (sulfur carrier)-SH + 2 reduced [2Fe-2S]-[ferredoxin] + 2 S-adenosyl-L-methionine = (sulfur carrier)-H + biotin + 2 5'-deoxyadenosine + 2 L-methionine + 2 oxidized [2Fe-2S]-[ferredoxin]. The protein operates within cofactor biosynthesis; biotin biosynthesis; biotin from 7,8-diaminononanoate: step 2/2. In terms of biological role, catalyzes the conversion of dethiobiotin (DTB) to biotin by the insertion of a sulfur atom into dethiobiotin via a radical-based mechanism. In Acidovorax sp. (strain JS42), this protein is Biotin synthase.